Consider the following 255-residue polypeptide: Protein patched homolog 2 (255 aa).

The Extracellular segment spans residues 1–197; it reads SLLQGGSAYL…LNDIMKSFSD (197 aa). N-linked (GlcNAc...) asparagine glycans are attached at residues N147 and N175. Residues 198-218 traverse the membrane as a helical segment; the sequence is VSVIRVAGGYLLMLAYACVTM. Residues 199 to 255 enclose the SSD domain; that stretch reads SVIRVAGGYLLMLAYACVTMLRWDCTKSQGAVGLAGVLLVALSVASGLGLCSLLGIS. Residues 219 to 227 lie on the Cytoplasmic side of the membrane; that stretch reads LRWDCTKSQ. Residues 228-248 form a helical membrane-spanning segment; the sequence is GAVGLAGVLLVALSVASGLGL. The Extracellular portion of the chain corresponds to 249–255; sequence CSLLGIS.

Belongs to the patched family. In terms of tissue distribution, in the eye, detected in neural retina, iris, retinal pigment epithelium, but not in lens.

Its subcellular location is the membrane. Functionally, may act as a receptor for sonic hedgehog (SHH). This is Protein patched homolog 2 (PTC2) from Cynops pyrrhogaster (Japanese fire-bellied newt).